Here is a 581-residue protein sequence, read N- to C-terminus: Frizzled-8 (581 aa).

Positions 1–23 (MESLSLSLLLLVSWLQGSQCAAA) are cleaved as a signal peptide. The FZ domain maps to 24–144 (KELSCQEITV…GNPDTLCMDY (121 aa)). The Extracellular segment spans residues 24 to 239 (KELSCQEITV…PEERTFTEFW (216 aa)). 5 disulfides stabilise this stretch: Cys28–Cys89, Cys36–Cys82, Cys73–Cys111, Cys100–Cys141, and Cys104–Cys128. A glycan (N-linked (GlcNAc...) asparagine) is linked at Asn42. 64 to 71 (QFWPLVVI) lines the hexadecanoate pocket. Residues 88–93 (ICLEDY) form a wnt-binding region. The wnt-binding stretch occupies residues 140-146 (LCMDYYN). The N-linked (GlcNAc...) asparagine glycan is linked to Asn146. Residues 151-189 (TTAAPSHPEPPKPPARSVPKGRTRVEPPRSRSRATGCES) are disordered. Residues 157 to 166 (HPEPPKPPAR) are compositionally biased toward pro residues. The helical transmembrane segment at 240–260 (IGLWSVLCFASTFATVSTFLI) threads the bilayer. Over 261–271 (DMERFKYPERP) the chain is Cytoplasmic. Residues 272-292 (IIFLSACYLLVSTGYLIRLIA) traverse the membrane as a helical segment. Residues 293-320 (GHEKVACSRGELDLEHIIHYETTGPALC) lie on the Extracellular side of the membrane. Residues 321–341 (TLVFLLIYFFGMASSIWWVIL) form a helical membrane-spanning segment. Topologically, residues 342-377 (SLTWFLAAGMKWGNEAIAGYSQYFHLAAWLVPSIKS) are cytoplasmic. A helical transmembrane segment spans residues 378–398 (IAVLALSSVDGDPVAGICFVG). Topologically, residues 399–407 (NQNLDNLRG) are extracellular. The helical transmembrane segment at 408 to 428 (FVLAPLVIYLFIGSMFLLAGF) threads the bilayer. Over 429 to 454 (VSLFRIRSVIKQGGTKTDKLEKLMIR) the chain is Cytoplasmic. Residues 455-475 (IGIFSVLYTVPATIVVACFFY) form a helical membrane-spanning segment. At 476–505 (EQHNRQGWEVAHNCNSCQPEMAQPHRPDYA) the chain is on the extracellular side. The helical transmembrane segment at 506 to 526 (VFMLKYFMCLVVGITSGVWIW) threads the bilayer. Over 527 to 581 (SGKTLESWRAFCTRCCWGSKATGGSMYSDVSTGLTWRSGTGSSVSCPKQMPLSQV) the chain is Cytoplasmic. The Lys-Thr-X-X-X-Trp motif, mediates interaction with the PDZ domain of Dvl family members motif lies at 529–534 (KTLESW). A PDZ-binding motif is present at residues 579 to 581 (SQV).

Belongs to the G-protein coupled receptor Fz/Smo family. As to quaternary structure, interacts with lypd6 and the interaction is strongly enhanced by wnt3a.

The protein localises to the membrane. Its subcellular location is the cell membrane. Its function is as follows. Receptor for Wnt proteins. Most of frizzled receptors are coupled to the beta-catenin canonical signaling pathway, which leads to the activation of disheveled proteins, inhibition of GSK-3 kinase, nuclear accumulation of beta-catenin and activation of Wnt target genes. A second signaling pathway involving PKC and calcium fluxes has been seen for some family members, but it is not yet clear if it represents a distinct pathway or if it can be integrated in the canonical pathway, as PKC seems to be required for Wnt-mediated inactivation of GSK-3 kinase. Both pathways seem to involve interactions with G-proteins. May be involved in transduction and intercellular transmission of polarity information during tissue morphogenesis and/or in differentiated tissues. Activation by Wnt8, Wnt5A or Wnt3A induces expression of beta-catenin target genes. Displays an axis-inducing activity. This chain is Frizzled-8 (fzd8), found in Xenopus laevis (African clawed frog).